The primary structure comprises 448 residues: GTPase Der (448 aa).

EngA-type G domains are found at residues 3–167 (PVIA…EPPE) and 182–355 (TRLA…ASAT). Residues 9 to 16 (GRPNVGKS), 56 to 60 (DTGGF), 119 to 122 (NKAE), 188 to 195 (GRPNVGKS), 235 to 239 (DTAGL), and 300 to 303 (NKWD) each bind GTP. Residues 356 to 440 (RKLPTPQLTR…PMRIELRASH (85 aa)) form the KH-like domain.

This sequence belongs to the TRAFAC class TrmE-Era-EngA-EngB-Septin-like GTPase superfamily. EngA (Der) GTPase family. Associates with the 50S ribosomal subunit.

In terms of biological role, GTPase that plays an essential role in the late steps of ribosome biogenesis. This is GTPase Der from Leptothrix cholodnii (strain ATCC 51168 / LMG 8142 / SP-6) (Leptothrix discophora (strain SP-6)).